Reading from the N-terminus, the 2353-residue chain is Nonribosomal peptide synthetase 7 (2353 aa).

An adenylation 1 region spans residues 305-684; sequence TFSALNTRAN…AIEEVEDSAV (380 aa). A Carrier 1 domain is found at 776–853; it reads RDLTDSEKVV…QVAAAVQPQP (78 aa). Residue Ser813 is modified to O-(pantetheine 4'-phosphoryl)serine. The interval 885-1147 is condensation 1; it reads EDAFPVTPFQ…LMVAPLRVKV (263 aa). The segment at 1338-1725 is adenylation 2; it reads TYAGLAIKMN…QTNVFRQCAV (388 aa). The Carrier 2 domain maps to 1826–1902; the sequence is EICSEAEREL…EQAALMVQGQ (77 aa). Ser1863 carries the O-(pantetheine 4'-phosphoryl)serine modification. The segment at 1939-2214 is condensation 2; the sequence is EDIYPCSPGQ…NGNCANFLPY (276 aa).

Belongs to the NRP synthetase family.

In terms of biological role, nonribosomal peptide synthesis (NRPS) is a key mechanism responsible for the biosynthesis of bioactive metabolites which are potentially contributing to organismal virulence. This is Nonribosomal peptide synthetase 7 (NRPS7) from Aspergillus fumigatus (strain ATCC MYA-4609 / CBS 101355 / FGSC A1100 / Af293) (Neosartorya fumigata).